The sequence spans 153 residues: Regulatory protein RecX (153 aa).

Belongs to the RecX family.

It is found in the cytoplasm. In terms of biological role, modulates RecA activity. This Mannheimia succiniciproducens (strain KCTC 0769BP / MBEL55E) protein is Regulatory protein RecX.